A 78-amino-acid chain; its full sequence is Large ribosomal subunit protein bL28 (78 aa).

The protein belongs to the bacterial ribosomal protein bL28 family.

This chain is Large ribosomal subunit protein bL28, found in Azoarcus sp. (strain BH72).